Consider the following 630-residue polypeptide: Sodium-dependent serotonin transporter (630 aa).

Residues 1-87 are Cytoplasmic-facing; sequence METTPLNSQK…ERETWGKKMD (87 aa). Residues 23 to 60 form a disordered region; it reads ENGVLQKGVPTTADRAEPSQISNGYSAVPSTSAGDEAS. Polar residues predominate over residues 41 to 55; it reads SQISNGYSAVPSTSA. A Phosphotyrosine modification is found at Y47. Residues 88–112 form a helical membrane-spanning segment; the sequence is FLLSVIGYAVDLGNIWRFPYICYQN. The Na(+) site is built by G94, A96, V97, D98, and N101. Residue D98 coordinates serotonin. Over 113–115 the chain is Extracellular; it reads GGG. Residues 116–135 traverse the membrane as a helical segment; sequence AFLLPYTIMAIFGGIPLFYM. Residues 136–160 lie on the Cytoplasmic side of the membrane; that stretch reads ELALGQYHRNGCISIWRKICPIFKG. Y142 carries the phosphotyrosine modification. A helical membrane pass occupies residues 161–186; it reads IGYAICIIAFYIASYYNTIIAWALYY. At 187–252 the chain is on the extracellular side; the sequence is LISSLTDRLP…KGLQDLGTIS (66 aa). C200 and C209 form a disulfide bridge. 2 N-linked (GlcNAc...) asparagine glycosylation sites follow: N208 and N217. A helical membrane pass occupies residues 253–271; it reads WQLTLCIVLIFTVIYFSIW. Residues 272 to 277 are Cytoplasmic-facing; sequence KGVKTS. A Phosphothreonine modification is found at T276. A helical transmembrane segment spans residues 278 to 297; the sequence is GKVVWVTATFPYIVLSVLLV. The Extracellular segment spans residues 298 to 324; it reads RGATLPGAWRGVVFYLKPNWQKLLETG. Residues 325–347 form a helical membrane-spanning segment; that stretch reads VWVDAAAQIFFSLGPGFGVLLAF. Residue S336 coordinates Na(+). Over 348 to 360 the chain is Cytoplasmic; it reads ASYNKFNNNCYQD. The helical transmembrane segment at 361-380 threads the bilayer; sequence ALVTSVVNCMTSFVSGFVIF. Residue N368 participates in Na(+) binding. The Extracellular portion of the chain corresponds to 381 to 421; it reads TVLGYMAEMRNEDVSEVAKDAGPSLLFITYAEAIANMPAST. The helical transmembrane segment at 422-443 threads the bilayer; sequence FFAIIFFLMLITLGLDSTFAGL. Na(+)-binding residues include L434, D437, and S438. Serotonin is bound at residue T439. Over 444–463 the chain is Cytoplasmic; the sequence is EGVITAVLDEFPHIWAKRRE. A helical membrane pass occupies residues 464-483; the sequence is WFVLIVVITCVLGSLLTLTS. Residues 484–494 lie on the Extracellular side of the membrane; it reads GGAYVVTLLEE. Serotonin-binding residues include E494 and Y495. The helical transmembrane segment at 495–516 threads the bilayer; it reads YATGPAVLTVALIEAVAVSWFY. Topologically, residues 517-538 are cytoplasmic; sequence GITQFCSDVKEMLGFSPGWFWR. A helical membrane pass occupies residues 539 to 558; it reads ICWVAISPLFLLFIICSFLM. Serotonin contacts are provided by F556 and S559. Over 559 to 574 the chain is Extracellular; that stretch reads SPPQLRLFQYNYPHWS. The helical transmembrane segment at 575-595 threads the bilayer; sequence IVLGYCIGMSSVICIPTYIIY. Residues 596–630 lie on the Cytoplasmic side of the membrane; sequence RLISTPGTLKERIIKSITPETPTEIPCGDIRMNAV. The tract at residues 616 to 624 is interaction with RAB4A; that stretch reads TPTEIPCGD.

The protein belongs to the sodium:neurotransmitter symporter (SNF) (TC 2.A.22) family. SLC6A4 subfamily. Monomer or homooligomer. Interacts with TGFB1I1. Interacts with SEC23A, SEC24C and PATJ. Interacts with NOS1; the interaction may diminish the cell surface localization of SERT in the brain and, correspondingly, reduce serotonin reuptake. Interacts (via C-terminus) with SCAMP2; the interaction is direct and retains transporter molecules intracellularly. Interacts with filamentous actin and STX1A. Interacts (via the N-terminus) with STX1A (via the H3 domain); this interaction regulates SLC4A6 channel conductance. Interacts with ITGAV:ITGB3. Interacts (via C-terminus) with ITGB3; this interaction regulates SLC6A4 trafficking. In terms of processing, phosphorylation at Thr-276 increases 5-HT uptake and is required for cGMP-mediated SERT regulation. Expressed in the intestinal crypt epithelial cells and myenteric neurons of the small intestine (at protein level). Expressed in the brain.

It localises to the cell membrane. The protein resides in the endomembrane system. The protein localises to the endosome membrane. Its subcellular location is the synapse. It is found in the cell junction. It localises to the focal adhesion. The protein resides in the cell projection. The protein localises to the neuron projection. It catalyses the reaction serotonin(out) + K(+)(in) + Na(+)(out) + H(+)(in) = serotonin(in) + K(+)(out) + Na(+)(in) + H(+)(out). Its function is as follows. Serotonin transporter that cotransports serotonin with one Na(+) ion in exchange for one K(+) ion and possibly one proton in an overall electroneutral transport cycle. Transports serotonin across the plasma membrane from the extracellular compartment to the cytosol thus limiting serotonin intercellular signaling. Essential for serotonin homeostasis in the central nervous system. In the developing somatosensory cortex, acts in glutamatergic neurons to control serotonin uptake and its trophic functions accounting for proper spatial organization of cortical neurons and elaboration of sensory circuits. In the mature cortex, acts primarily in brainstem raphe neurons to mediate serotonin uptake from the synaptic cleft back into the pre-synaptic terminal thus terminating serotonin signaling at the synapse. Modulates mucosal serotonin levels in the gastrointestinal tract through uptake and clearance of serotonin in enterocytes. Required for enteric neurogenesis and gastrointestinal reflexes. Regulates blood serotonin levels by ensuring rapid high affinity uptake of serotonin from plasma to platelets, where it is further stored in dense granules via vesicular monoamine transporters and then released upon stimulation. Mechanistically, the transport cycle starts with an outward-open conformation having Na1(+) and Cl(-) sites occupied. The binding of a second extracellular Na2(+) ion and serotonin substrate leads to structural changes to outward-occluded to inward-occluded to inward-open, where the Na2(+) ion and serotonin are released into the cytosol. Binding of intracellular K(+) ion induces conformational transitions to inward-occluded to outward-open and completes the cycle by releasing K(+) possibly together with a proton bound to Asp-98 into the extracellular compartment. Na1(+) and Cl(-) ions remain bound throughout the transport cycle. Additionally, displays serotonin-induced channel-like conductance for monovalent cations, mainly Na(+) ions. The channel activity is uncoupled from the transport cycle and may contribute to the membrane resting potential or excitability. In Rattus norvegicus (Rat), this protein is Sodium-dependent serotonin transporter (Slc6a4).